Reading from the N-terminus, the 397-residue chain is MVSLSTIKSLIEKKGANLPENVKSELYEKLKKYNEKYKLTKAEIEAIIDDVVKEYERALVEPGEPVGTVAAQSIGEPSTQMTLNTFHYAGVAEINVTLGLPRIIEIVDARKNPSTPMMTVYLDEEHRYDRAKAEEVARRIEGTTLENLARSTTLDLINFEFIVEIDPERLERSGLTMEKVVKKLESSFKSAEFEVDGYTLIVRPKKADKISDLRRFAEKIKKHRLKGLSGVGKTIVRKEGDEYVIYTEGSNFKQVLKVPGVDPTRTRTNNIHEIAEVLGIEAARNAIIDEIVSTMQEQGLEVDIRHIMLVADMMTLDGIVRPIGRHGVVGEKSSVLARAAFEITVQHLFEAAEKGEVDNLNGVIENVLIGQPVPVGTGMVKLTMKLPLRPQKEKEEV.

This sequence belongs to the RNA polymerase beta' chain family. As to quaternary structure, part of the RNA polymerase complex. An artificial construct of the RNAP clamp domain (including part of this protein) contacts transcription elongation factors Spt4 and Spt5.

The protein resides in the cytoplasm. The enzyme catalyses RNA(n) + a ribonucleoside 5'-triphosphate = RNA(n+1) + diphosphate. In terms of biological role, DNA-dependent RNA polymerase (RNAP) catalyzes the transcription of DNA into RNA using the four ribonucleoside triphosphates as substrates. Forms part of the jaw domain. The chain is DNA-directed RNA polymerase subunit Rpo1C from Pyrococcus furiosus (strain ATCC 43587 / DSM 3638 / JCM 8422 / Vc1).